The following is a 407-amino-acid chain: Carbamoyl phosphate synthase small chain (407 aa).

Residues 1–203 (MSQNESGTIA…EPCGEYEGKE (203 aa)) form a CPSase region. L-glutamine-binding residues include S61, G255, and G257. A Glutamine amidotransferase type-1 domain is found at 207 to 405 (TVAAVDLGIK…CELMKNNSKE (199 aa)). The Nucleophile role is filled by C283. Positions 284, 287, 325, 327, and 328 each coordinate L-glutamine. Residues H378 and E380 contribute to the active site.

Belongs to the CarA family. As to quaternary structure, composed of two chains; the small (or glutamine) chain promotes the hydrolysis of glutamine to ammonia, which is used by the large (or ammonia) chain to synthesize carbamoyl phosphate. Tetramer of heterodimers (alpha,beta)4.

It carries out the reaction hydrogencarbonate + L-glutamine + 2 ATP + H2O = carbamoyl phosphate + L-glutamate + 2 ADP + phosphate + 2 H(+). The enzyme catalyses L-glutamine + H2O = L-glutamate + NH4(+). It functions in the pathway amino-acid biosynthesis; L-arginine biosynthesis; carbamoyl phosphate from bicarbonate: step 1/1. Its pathway is pyrimidine metabolism; UMP biosynthesis via de novo pathway; (S)-dihydroorotate from bicarbonate: step 1/3. Small subunit of the glutamine-dependent carbamoyl phosphate synthetase (CPSase). CPSase catalyzes the formation of carbamoyl phosphate from the ammonia moiety of glutamine, carbonate, and phosphate donated by ATP, constituting the first step of 2 biosynthetic pathways, one leading to arginine and/or urea and the other to pyrimidine nucleotides. The small subunit (glutamine amidotransferase) binds and cleaves glutamine to supply the large subunit with the substrate ammonia. This chain is Carbamoyl phosphate synthase small chain, found in Bifidobacterium longum (strain NCC 2705).